Consider the following 520-residue polypeptide: Ribonuclease Y (520 aa).

The helical transmembrane segment at 3 to 23 (FILVLCTVSSLFVGGGTGIFL) threads the bilayer. Positions 209 to 272 (TVTAVTLPSE…QVAKMALERL (64 aa)) constitute a KH domain. The region spanning 335 to 429 (VLRHSIEVAS…VQASDCLSGA (95 aa)) is the HD domain.

The protein belongs to the RNase Y family.

The protein localises to the cell membrane. Functionally, endoribonuclease that initiates mRNA decay. The chain is Ribonuclease Y from Lawsonia intracellularis (strain PHE/MN1-00).